Consider the following 100-residue polypeptide: Large ribosomal subunit protein uL23 (100 aa).

Belongs to the universal ribosomal protein uL23 family. As to quaternary structure, part of the 50S ribosomal subunit. Contacts protein L29, and trigger factor when it is bound to the ribosome.

Its function is as follows. One of the early assembly proteins it binds 23S rRNA. One of the proteins that surrounds the polypeptide exit tunnel on the outside of the ribosome. Forms the main docking site for trigger factor binding to the ribosome. This Edwardsiella ictaluri (strain 93-146) protein is Large ribosomal subunit protein uL23.